The sequence spans 121 residues: Autophagy-related protein 8f (121 aa).

A lipid anchor (Phosphatidylethanolamine amidated glycine) is attached at G117. The propeptide at 118 to 121 is removed in mature form; it reads FGSP.

This sequence belongs to the ATG8 family. Interacts with ATG4. Interacts with NBR1. Interacts with ATI1 and ATI2. Interacts with SH3P2. In terms of processing, the C-terminal 4 residues are removed by ATG4 to expose Gly-117 at the C-terminus. This Gly-117 forms then a thioester bond with the 'Cys-558' of ATG7 (E1-like activating enzyme) before being transferred to the 'Cys-258' of ATG3 (the specific E2 conjugating enzyme), in order to be finally amidated with phosphatidylethanolamine. This lipid modification anchors ATG8 to autophagosomes. Constitutively expressed.

The protein localises to the cytoplasmic vesicle. It is found in the autophagosome membrane. It localises to the vacuole membrane. The protein resides in the cytoplasm. Its subcellular location is the cytoskeleton. In terms of biological role, ubiquitin-like modifier involved in autophagosomes formation. May mediate the delivery of the autophagosomes to the vacuole via the microtubule cytoskeleton. This chain is Autophagy-related protein 8f (ATG8F), found in Arabidopsis thaliana (Mouse-ear cress).